Reading from the N-terminus, the 247-residue chain is Ribonuclease 3 (247 aa).

Residues 21–149 enclose the RNase III domain; it reads VDHQPLLDHL…LFGAIFRQHG (129 aa). E62 serves as a coordination point for Mg(2+). The active site involves D66. Residues D135 and E138 each coordinate Mg(2+). The active site involves E138. In terms of domain architecture, DRBM spans 176–244; it reads DWKTTLQEEL…AHQAFRKLRE (69 aa).

It belongs to the ribonuclease III family. As to quaternary structure, homodimer. It depends on Mg(2+) as a cofactor.

The protein resides in the cytoplasm. It catalyses the reaction Endonucleolytic cleavage to 5'-phosphomonoester.. In terms of biological role, digests double-stranded RNA. Involved in the processing of primary rRNA transcript to yield the immediate precursors to the large and small rRNAs (23S and 16S). Processes some mRNAs, and tRNAs when they are encoded in the rRNA operon. Processes pre-crRNA and tracrRNA of type II CRISPR loci if present in the organism. In Corynebacterium glutamicum (strain ATCC 13032 / DSM 20300 / JCM 1318 / BCRC 11384 / CCUG 27702 / LMG 3730 / NBRC 12168 / NCIMB 10025 / NRRL B-2784 / 534), this protein is Ribonuclease 3.